The sequence spans 278 residues: NAD-capped RNA hydrolase NudC (278 aa).

Residue arginine 84 coordinates substrate. Positions 114 and 117 each coordinate Zn(2+). Substrate is bound at residue glutamate 127. A Zn(2+)-binding site is contributed by cysteine 132. A substrate-binding site is contributed by tyrosine 140. The Nudix hydrolase domain occupies 141–264 (PRISPSMIVL…SIARYLIEAY (124 aa)). The a divalent metal cation site is built by alanine 174, glutamate 190, and glutamate 194. The Nudix box motif lies at 175–196 (GFVEPGESAEDCVHREVMEEVQ). Residue 208–215 (QCWPFPHS) participates in substrate binding. Glutamate 235 is a binding site for a divalent metal cation. Substrate is bound at residue alanine 257.

Belongs to the Nudix hydrolase family. NudC subfamily. In terms of assembly, homodimer. It depends on Mg(2+) as a cofactor. Mn(2+) is required as a cofactor. Zn(2+) serves as cofactor.

It carries out the reaction a 5'-end NAD(+)-phospho-ribonucleoside in mRNA + H2O = a 5'-end phospho-adenosine-phospho-ribonucleoside in mRNA + beta-nicotinamide D-ribonucleotide + 2 H(+). The enzyme catalyses NAD(+) + H2O = beta-nicotinamide D-ribonucleotide + AMP + 2 H(+). The catalysed reaction is NADH + H2O = reduced beta-nicotinamide D-ribonucleotide + AMP + 2 H(+). MRNA decapping enzyme that specifically removes the nicotinamide adenine dinucleotide (NAD) cap from a subset of mRNAs by hydrolyzing the diphosphate linkage to produce nicotinamide mononucleotide (NMN) and 5' monophosphate mRNA. The NAD-cap is present at the 5'-end of some mRNAs and stabilizes RNA against 5'-processing. Has preference for mRNAs with a 5'-end purine. Catalyzes the hydrolysis of a broad range of dinucleotide pyrophosphates. The chain is NAD-capped RNA hydrolase NudC from Pseudomonas syringae pv. tomato (strain ATCC BAA-871 / DC3000).